A 365-amino-acid chain; its full sequence is S-type anion channel SLAH4 (365 aa).

Over 1–25 (MEIPSQEIHIMIDNTISRRKERKTN) the chain is Cytoplasmic. A helical membrane pass occupies residues 26–46 (LADAEPIVLMSVLSSLHAGYF). The Extracellular segment spans residues 47-73 (RISLSLCSQALLWKIMVHLHSELPSMA). Residues 74–94 (YYLLWYLALATQVSLCFLYAF) form a helical membrane-spanning segment. The Cytoplasmic segment spans residues 95–106 (KCIFLFDMVKEE). Residues 107–127 (FSHYIGVNYLYAPSISCLLLL) traverse the membrane as a helical segment. Residues 128–131 (QSAP) are Extracellular-facing. Residues 132–152 (MIEPHSVLYQTLFWIFAVPVL) form a helical membrane-spanning segment. Residues 153-168 (TLDTKLYGQWFTTEKR) are Cytoplasmic-facing. A helical membrane pass occupies residues 169–189 (FLSIMANPASQVSVIANLVAA). Residues 190-199 (RGAAEMGWKE) are Extracellular-facing. The chain crosses the membrane as a helical span at residues 200–220 (CALCLFSLGMVHYLVIFVTLY). The Cytoplasmic portion of the chain corresponds to 221 to 235 (QRLPGGNNFPTTLRP). Residues 236–256 (VFFLFFAAPATASLAWNSICG) traverse the membrane as a helical segment. Position 257 (asparagine 257) is a topological domain, extracellular. Residues 258 to 278 (FDTIAKMLFFLSLFIFISLVC) form a helical membrane-spanning segment. The Cytoplasmic segment spans residues 279–291 (RPNLLKKSIKRFN). Residues 292–312 (VAWWAYSFPITFLALNSVQYA) form a helical membrane-spanning segment. The Extracellular portion of the chain corresponds to 313 to 321 (QEVKDHVAS). Residues 322-342 (VLMFIFSSMSVLIFISVMLLT) traverse the membrane as a helical segment. Topologically, residues 343-365 (AANSKRLLRRDHVLWSSTGPKDK) are cytoplasmic.

The protein belongs to the SLAC1 S-type anion channel family. In terms of assembly, homotrimer.

The protein localises to the cell membrane. Slow, weak voltage-dependent S-type anion efflux channel involved in maintenance of anion homeostasis. The sequence is that of S-type anion channel SLAH4 (SLAH4) from Arabidopsis thaliana (Mouse-ear cress).